The sequence spans 536 residues: Apolipoprotein N-acyltransferase (536 aa).

6 helical membrane-spanning segments follow: residues Pro-34–Ala-54, Ala-64–Ile-84, Tyr-89–Ala-109, Gly-129–Trp-149, Tyr-172–Trp-192, and His-199–Gln-219. Residues Leu-244 to Gly-487 form the CN hydrolase domain. Glu-283 acts as the Proton acceptor in catalysis. Lys-345 is an active-site residue. The Nucleophile role is filled by Cys-395. The helical transmembrane segment at Trp-503 to Trp-523 threads the bilayer.

Belongs to the CN hydrolase family. Apolipoprotein N-acyltransferase subfamily.

The protein localises to the cell inner membrane. It catalyses the reaction N-terminal S-1,2-diacyl-sn-glyceryl-L-cysteinyl-[lipoprotein] + a glycerophospholipid = N-acyl-S-1,2-diacyl-sn-glyceryl-L-cysteinyl-[lipoprotein] + a 2-acyl-sn-glycero-3-phospholipid + H(+). Its pathway is protein modification; lipoprotein biosynthesis (N-acyl transfer). Its function is as follows. Catalyzes the phospholipid dependent N-acylation of the N-terminal cysteine of apolipoprotein, the last step in lipoprotein maturation. This is Apolipoprotein N-acyltransferase from Verminephrobacter eiseniae (strain EF01-2).